The chain runs to 241 residues: DNA repair protein RecO (241 aa).

The protein belongs to the RecO family.

Functionally, involved in DNA repair and RecF pathway recombination. This Yersinia pseudotuberculosis serotype O:1b (strain IP 31758) protein is DNA repair protein RecO.